The chain runs to 523 residues: MSFRKEDGVSSLCQKALHIITELCFAGQVEWDKCSGIFPADRSGQGGGGTDISVSLLAVVVSFCGLALLVVSLFVFWKLCWPCWKSKLVAPNLSVLPQSISSAPTEVFETEEKKEVEENEKPAPKAIEPAIKISHTSPDIPAEVQTALKEHLIKHARVQRQTTEPTSSSRHNSFRRHLPRQMNVSSVDFSVGTEPILQRGETRTSIGRIKPELYKQKSVDSEGNRKDDVKTCGKLNFALQYDYENELLVVKIIKALDLPAKDFTGTSDPYVKIYLLPDRKKKFQTRVHRKTLNPLFDELFQFPVVYDQLSNRKLHFSIYDFDRFSRHDMIGEVILDNLFEVSDLSREATVWKDIHCATTESIDLGEIMFSLCYLPTAGRMTLTVIKCRNLKAMDITGSSDPYVKVSLMCEGRRLKKRKTTTKKNTLNPVYNEAIIFDIPPENVDQVSLCIAVMDYDRVGHNEVIGVCRTGLDAEGLGRDHWNEMLAYHRKPITHWHPLLELPGRATSFDSQGSCSSPRPPSTP.

The Vesicular segment spans residues 1 to 55 (MSFRKEDGVSSLCQKALHIITELCFAGQVEWDKCSGIFPADRSGQGGGGTDISVS). The cysteine motif stretch occupies residues 13 to 35 (CQKALHIITELCFAGQVEWDKCS). The helical transmembrane segment at 56–76 (LLAVVVSFCGLALLVVSLFVF) threads the bilayer. Over 77–523 (WKLCWPCWKS…CSSPRPPSTP (447 aa)) the chain is Cytoplasmic. A Phosphothreonine modification is found at Thr136. C2 domains are found at residues 231 to 352 (TCGK…TVWK) and 363 to 496 (DLGE…THWH). Residues Asp262, Asp268, Asp320, Phe321, Asp322, Ser325, Asp328, Asp394, Asp400, Asp454, and Asp456 each coordinate Ca(2+).

This sequence belongs to the synaptotagmin family. Homodimer; disulfide-linked via the cysteine motif. Can also form heterodimers with SYT3, SYT6, SYT7 and SYT9. The cofactor is Ca(2+). In terms of tissue distribution, highly expressed in the olfactory bulb.

Its subcellular location is the cytoplasmic vesicle. It is found in the secretory vesicle membrane. Functionally, ca(2+) sensor specifically required for the Ca(2+)-dependent exocytosis of secretory vesicles containing IGF1 in neurons of the olfactory bulb. Exocytosis of IGF1 is required for sensory perception of smell. Not involved in Ca(2+)-dependent synaptic vesicle exocytosis. Acts through Ca(2+) and phospholipid binding to the C2 domain: Ca(2+) induces binding of the C2-domains to phospholipid membranes and to assembled SNARE-complexes; both actions contribute to triggering exocytosis. In Mus musculus (Mouse), this protein is Synaptotagmin-10.